The chain runs to 676 residues: Methionine--tRNA ligase (676 aa).

The short motif at 15–25 (PYANGPIHLGH) is the 'HIGH' region element. Zn(2+) is bound by residues Cys146, Cys149, Cys159, and Cys162. The 'KMSKS' region signature appears at 332–336 (KMSKS). Position 335 (Lys335) interacts with ATP. Positions 575–676 (DFAKIDLRIA…EGAQPGMRVK (102 aa)) constitute a tRNA-binding domain.

The protein belongs to the class-I aminoacyl-tRNA synthetase family. MetG type 1 subfamily. In terms of assembly, homodimer. It depends on Zn(2+) as a cofactor.

The protein resides in the cytoplasm. It carries out the reaction tRNA(Met) + L-methionine + ATP = L-methionyl-tRNA(Met) + AMP + diphosphate. Functionally, is required not only for elongation of protein synthesis but also for the initiation of all mRNA translation through initiator tRNA(fMet) aminoacylation. The sequence is that of Methionine--tRNA ligase from Shewanella sp. (strain MR-4).